Reading from the N-terminus, the 661-residue chain is Bifunctional xylanase/xylan deacetylase (661 aa).

A signal peptide spans 1 to 27 (MKLPTLGKCVVRTLMGAVALGAISVNA). The region spanning 29-226 (TLSSNSTGTN…SRGSSDITVS (198 aa)) is the GH11 domain. The active-site Nucleophile; for endoxylanase activity is the E116. The active-site Proton donor; for endoxylanase activity is E213. Residues 220–259 (SSDITVSEGTSGGGTSSVGGASSSVNSSTGGGSSGGITVR) form a disordered region. Positions 237–247 (VGGASSSVNSS) are enriched in low complexity. Residues 394-577 (SNCSGYVGIT…AKGLCPGRID (184 aa)) are polysaccharide deacetylase. Residues 398–574 (GYVGITFDDG…NLRAKGLCPG (177 aa)) enclose the NodB homology domain. Residues 578 to 610 (PNTGRAVAPSSSGGSSSVALSSSSRSSSSAGGN) form a disordered region. A compositionally biased stretch (low complexity) spans 581–608 (GRAVAPSSSGGSSSVALSSSSRSSSSAG). One can recognise a CBM10 domain in the interval 616 to 645 (QCNWWGTFYPLCQTQTSGWGWENSRSCIST).

In the N-terminal section; belongs to the glycosyl hydrolase 11 (cellulase G) family.

The protein localises to the secreted. The enzyme catalyses Endohydrolysis of (1-&gt;4)-beta-D-xylosidic linkages in xylans.. The catalysed reaction is Deacetylation of xylans and xylo-oligosaccharides.. The protein operates within glycan degradation; xylan degradation. Functionally, endo-acting xylanase which specifically cleaves internal linkages on the xylan backbone, releasing xylooligosaccharides. Is able to hydrolyze oat spelt xylan and the arabinoxylans from wheat and rye, releasing xylobiose as the major product. Also likely catalyzes, via its C-terminal domain, the removal of acetyl groups from acetylated xylan. Thus, has the capability of hydrolyzing acetylated xylan. Does not attack mannan, galactan, arabinan or any cellulosic substrates. The chain is Bifunctional xylanase/xylan deacetylase (xyn11A) from Cellvibrio japonicus (Pseudomonas fluorescens subsp. cellulosa).